We begin with the raw amino-acid sequence, 186 residues long: UPF0157 protein SCO7215 (186 aa).

It belongs to the UPF0157 (GrpB) family.

In Streptomyces coelicolor (strain ATCC BAA-471 / A3(2) / M145), this protein is UPF0157 protein SCO7215.